Reading from the N-terminus, the 267-residue chain is tRNA pseudouridine synthase A (267 aa).

Aspartate 55 (nucleophile) is an active-site residue. Tyrosine 111 provides a ligand contact to substrate.

Belongs to the tRNA pseudouridine synthase TruA family.

It carries out the reaction uridine(38/39/40) in tRNA = pseudouridine(38/39/40) in tRNA. In terms of biological role, formation of pseudouridine at positions 38, 39 and 40 in the anticodon stem and loop of transfer RNAs. This chain is tRNA pseudouridine synthase A, found in Thermococcus onnurineus (strain NA1).